Here is a 278-residue protein sequence, read N- to C-terminus: Large ribosomal subunit protein uL2 (278 aa).

Residues 202–278 (ANINDGKAGR…IMRSRHQRKK (77 aa)) form a disordered region.

This sequence belongs to the universal ribosomal protein uL2 family. As to quaternary structure, part of the 50S ribosomal subunit. Forms a bridge to the 30S subunit in the 70S ribosome.

Functionally, one of the primary rRNA binding proteins. Required for association of the 30S and 50S subunits to form the 70S ribosome, for tRNA binding and peptide bond formation. It has been suggested to have peptidyltransferase activity; this is somewhat controversial. Makes several contacts with the 16S rRNA in the 70S ribosome. The chain is Large ribosomal subunit protein uL2 from Rhizobium johnstonii (strain DSM 114642 / LMG 32736 / 3841) (Rhizobium leguminosarum bv. viciae).